A 331-amino-acid polypeptide reads, in one-letter code: MASLKNKHFMIGLSLTFIVALFSFLAAKLPILDKVGALTIAILIAILYRHFRGYPEQYSSGITFSSKYLLRFAIILYGLKLNIFDIIGQGSKLLAIDVGVVIFSIVMMLFVNKLLHGDKNIALLLGVGTGVCGAAAIAAVAPIFKSREKDTAISIGIIALIGTIFSLIYTAIYAIFSMTTNVYGAWSGVSLHEIAHVVLAGGFGGSDALKIALLGKLGRVFLLIPLTIVLILIMRFRSSESSSKGRISIPYFLIGFVIMALVNTYVTIPSALLNILNTVSTICLLMAMVALGLNVAFKDLKNRALKPLMTIIITSICLSSLAFIVVHWLYS.

Transmembrane regions (helical) follow at residues 9–26 (FMIG…SFLA), 31–48 (ILDK…AILY), 69–88 (LLRF…DIIG), 93–115 (LLAI…NKLL), 122–144 (ALLL…APIF), 154–176 (SIGI…YAIF), 183–202 (YGAW…LAGG), 217–234 (LGRV…ILIM), 247–269 (ISIP…VTIP), 273–295 (LNIL…GLNV), and 308–330 (LMTI…HWLY).

The protein belongs to the UPF0324 family.

Its subcellular location is the cell membrane. The chain is UPF0324 membrane protein SACOL0411 from Staphylococcus aureus (strain COL).